Reading from the N-terminus, the 359-residue chain is Protein-glutamate methylesterase/protein-glutamine glutaminase 2 (359 aa).

Positions 6 to 123 (KVMIVDDSAL…KSFLEDASND (118 aa)) constitute a Response regulatory domain. Asp57 carries the 4-aspartylphosphate modification. Residues 167–359 (ERTTDQLVAI…GAIVGYGKSC (193 aa)) form the CheB-type methylesterase domain. Residues Ser179, His205, and Asp301 contribute to the active site.

This sequence belongs to the CheB family. Phosphorylated by CheA. Phosphorylation of the N-terminal regulatory domain activates the methylesterase activity.

The protein localises to the cytoplasm. It carries out the reaction [protein]-L-glutamate 5-O-methyl ester + H2O = L-glutamyl-[protein] + methanol + H(+). The enzyme catalyses L-glutaminyl-[protein] + H2O = L-glutamyl-[protein] + NH4(+). In terms of biological role, involved in chemotaxis. Part of a chemotaxis signal transduction system that modulates chemotaxis in response to various stimuli. Catalyzes the demethylation of specific methylglutamate residues introduced into the chemoreceptors (methyl-accepting chemotaxis proteins or MCP) by CheR. Also mediates the irreversible deamidation of specific glutamine residues to glutamic acid. The protein is Protein-glutamate methylesterase/protein-glutamine glutaminase 2 of Dechloromonas aromatica (strain RCB).